The sequence spans 218 residues: Ras-related protein RabO (218 aa).

A GTP-binding site is contributed by 15-22 (GDYCVGKT). The Effector region signature appears at 37 to 45 (RNCNIGVDF). Residues 63–67 (DTGGQ) and 122–125 (NKID) contribute to the GTP site. Cys215 bears the Cysteine methyl ester mark. Residue Cys215 is the site of S-geranylgeranyl cysteine attachment. A propeptide spans 216-218 (FIL) (removed in mature form).

This sequence belongs to the small GTPase superfamily. Rab family.

Its subcellular location is the cell membrane. This chain is Ras-related protein RabO (rabO), found in Dictyostelium discoideum (Social amoeba).